We begin with the raw amino-acid sequence, 210 residues long: Vacuolar protein sorting-associated protein 2 homolog 3 (210 aa).

Residues 1 to 23 form a disordered region; it reads MNIFTKKPNPREVLRESKREMTQ. Residues 9 to 23 show a composition bias toward basic and acidic residues; sequence NPREVLRESKREMTQ. The stretch at 28–84 forms a coiled coil; sequence IEKEIGSLQSEEKKLVLEIKRTAKSGNEGATKILARQLIRLRQQIANLQGSRAQMRG. The interval 178 to 200 is disordered; it reads LSSAPKGKIGGKKAEDVGSSGID.

The protein belongs to the SNF7 family. Component of the endosomal sorting required for transport complex III (ESCRT-III), composed at least of VPS2, VPS20, VPS24 and VPS32.

The protein resides in the endosome. Functionally, component of the ESCRT-III complex, which is required for multivesicular bodies (MVBs) formation and sorting of endosomal cargo proteins into MVBs. The ESCRT-III complex is probably involved in the concentration of MVB cargo. In Arabidopsis thaliana (Mouse-ear cress), this protein is Vacuolar protein sorting-associated protein 2 homolog 3 (VPS2.3).